Here is a 331-residue protein sequence, read N- to C-terminus: 3-dehydroquinate synthase homolog (331 aa).

It belongs to the archaeal-type DHQ synthase family.

The sequence is that of 3-dehydroquinate synthase homolog from Persephonella marina (strain DSM 14350 / EX-H1).